Here is a 375-residue protein sequence, read N- to C-terminus: 2-heptyl-3-hydroxy-4(1H)-quinolone synthase (375 aa).

The protein belongs to the 3-hydroxybenzoate 6-hydroxylase family.

The catalysed reaction is 2-heptyl-4(1H)-quinolone + NADH + O2 + H(+) = 2-heptyl-3-hydroxy-4(1H)-quinolone + NAD(+) + H2O. In terms of biological role, involved in the degradation pathway of the Pseudomonas aeruginosa quorum sensing signal molecule HHQ (2-heptyl-4(1H)-quinolone) to anthranilate. Catalyzes the hydroxylation of HHQ to PQS (2-heptyl-3-hydroxy-4(1H)-quinolone). The chain is 2-heptyl-3-hydroxy-4(1H)-quinolone synthase from Mycobacteroides abscessus (strain ATCC 19977 / DSM 44196 / CCUG 20993 / CIP 104536 / JCM 13569 / NCTC 13031 / TMC 1543 / L948) (Mycobacterium abscessus).